Reading from the N-terminus, the 560-residue chain is Solute carrier family 49 member A3 (560 aa).

12 helical membrane-spanning segments follow: residues 30–50 (WVFL…WLSF), 70–90 (WLSL…IWIL), 100–120 (ILGA…CMVV), 125–145 (PFAF…LVIF), 166–186 (LATM…PVLV), 192–212 (IPLM…LSTI), 250–270 (VILA…SALL), 282–302 (GFSG…ALAL), 318–338 (IGLC…QLQG), 341–361 (LALA…GPVA), 379–399 (GMIF…MTAL), and 422–442 (VSLL…AVFF). The disordered stretch occupies residues 451-540 (AESGEPPSTR…PGRLAGRVQA (90 aa)). Residues 466-481 (ADSGPGVDRGGAGRAG) are compositionally biased toward gly residues.

Belongs to the major facilitator superfamily.

It is found in the membrane. In Homo sapiens (Human), this protein is Solute carrier family 49 member A3.